The chain runs to 50 residues: Defensin D4 (50 aa).

Intrachain disulfides connect Cys-3–Cys-50, Cys-14–Cys-35, Cys-20–Cys-44, and Cys-24–Cys-46.

As to expression, detected in seeds (at protein level).

It localises to the secreted. Its function is as follows. Antimicrobial peptide with antifungal activity. The chain is Defensin D4 from Nigella sativa (Black cumin).